The following is a 454-amino-acid chain: Butyrophilin-like protein 2 (454 aa).

Over methionine 1–arginine 6 the chain is Cytoplasmic. The chain crosses the membrane as a helical; Signal-anchor for type II membrane protein span at residues tyrosine 7–isoleucine 23. Over lysine 24 to tryptophan 454 the chain is Extracellular. Ig-like V-type domains lie at aspartate 27 to glutamine 140, proline 148 to alanine 234, alanine 244 to aspartate 355, and proline 365 to serine 452. 4 cysteine pairs are disulfide-bonded: cysteine 50-cysteine 124, cysteine 164-cysteine 218, cysteine 267-cysteine 341, and cysteine 381-cysteine 435. N-linked (GlcNAc...) asparagine glycosylation is found at asparagine 210, asparagine 296, asparagine 427, and asparagine 432.

Belongs to the immunoglobulin superfamily. BTN/MOG family. As to expression, highly expressed in intestine and at reduced levels in lung and stomach. Also expressed in thymus, spleen, lymph nodes, T-cells, B-cells, and macrophages.

Its subcellular location is the membrane. Negative regulator of T-cell proliferation. The protein is Butyrophilin-like protein 2 of Mus musculus (Mouse).